The sequence spans 133 residues: Large ribosomal subunit protein bL20 (133 aa).

The protein belongs to the bacterial ribosomal protein bL20 family.

Its function is as follows. Binds directly to 23S ribosomal RNA and is necessary for the in vitro assembly process of the 50S ribosomal subunit. It is not involved in the protein synthesizing functions of that subunit. This chain is Large ribosomal subunit protein bL20, found in Bartonella bacilliformis (strain ATCC 35685 / KC583 / Herrer 020/F12,63).